A 236-amino-acid polypeptide reads, in one-letter code: Thrombin-like enzyme kangshuanmei (236 aa).

A Peptidase S1 domain is found at 1 to 227 (VIGGDECNIN…HLDWIQSIIA (227 aa)). Intrachain disulfides connect Cys7–Cys141, Cys28–Cys44, Cys78–Cys234, Cys120–Cys188, Cys152–Cys167, and Cys178–Cys203. The Charge relay system role is filled by His43. Asn81 carries N-linked (GlcNAc...) asparagine glycosylation. Asp88 (charge relay system) is an active-site residue. 2 N-linked (GlcNAc...) asparagine glycosylation sites follow: Asn99 and Asn148. The active-site Charge relay system is Ser182. The N-linked (GlcNAc...) asparagine glycan is linked to Asn229.

The protein belongs to the peptidase S1 family. Snake venom subfamily. As to quaternary structure, monomer. N-glycosylated by units composed of Fuc, Man, GlcNAc, Gal and NeuAC residues. Expressed by the venom gland.

It is found in the secreted. Its activity is regulated as follows. Inhibited by 4-(2-aminoethyl)-benzensulfonyl fluoride. Not inhibited by antithrombin-III. Its function is as follows. Thrombin-like snake venom serine protease. Cleaves bonds after Arg and Lys, converts fibrinogen (FGA and FGB) to fibrin and releases both fibrinopeptides A and B, and fibrinogen peptide Bbeta1-42. Has a blood clotting activity. The polypeptide is Thrombin-like enzyme kangshuanmei (Gloydius brevicauda (Korean slamosa snake)).